We begin with the raw amino-acid sequence, 156 residues long: CASP-like protein 5C1 (156 aa).

The Cytoplasmic portion of the chain corresponds to 1–24; that stretch reads MENRERAGAGAVGSAGSLGLRVEQ. The helical transmembrane segment at 25-45 threads the bilayer; it reads AVFSSASLLFMSVGVEFFSYT. A46 is a topological domain (extracellular). Residues 47 to 67 form a helical membrane-spanning segment; the sequence is FCFLVTIMGLVIPWSCTLAMI. At 68–81 the chain is on the cytoplasmic side; the sequence is DVYSILVGCPLRVP. Residues 82–102 traverse the membrane as a helical segment; it reads GVMVIVVIGDWVLAILSLAAA. The Extracellular segment spans residues 103–132; sequence SSSAAVIDLLLQFHGSHCSPRFCGRYQLSA. A helical membrane pass occupies residues 133–153; the sequence is MMAFLSWFLTAASSLFNLWFI. At 154 to 156 the chain is on the cytoplasmic side; the sequence is ASR.

This sequence belongs to the Casparian strip membrane proteins (CASP) family. As to quaternary structure, homodimer and heterodimers.

It is found in the cell membrane. This is CASP-like protein 5C1 from Oryza sativa subsp. indica (Rice).